We begin with the raw amino-acid sequence, 37 residues long: Large ribosomal subunit protein bL36 (37 aa).

The protein belongs to the bacterial ribosomal protein bL36 family.

The protein is Large ribosomal subunit protein bL36 of Staphylococcus carnosus (strain TM300).